The following is a 621-amino-acid chain: UvrABC system protein C (621 aa).

In terms of domain architecture, GIY-YIG spans 13–92; the sequence is NEPGVYLMKN…IKKYSPKYNI (80 aa). The UVR domain maps to 204–239; that stretch reads RSLLNKLKEEMQSASGNLEFEKAASLRDKMIAIENI.

Belongs to the UvrC family. As to quaternary structure, interacts with UvrB in an incision complex.

The protein resides in the cytoplasm. The UvrABC repair system catalyzes the recognition and processing of DNA lesions. UvrC both incises the 5' and 3' sides of the lesion. The N-terminal half is responsible for the 3' incision and the C-terminal half is responsible for the 5' incision. This is UvrABC system protein C from Clostridium beijerinckii (strain ATCC 51743 / NCIMB 8052) (Clostridium acetobutylicum).